The sequence spans 364 residues: Monocarboxylate 2-oxoacid-binding periplasmic protein all3028 (364 aa).

Positions 1 to 26 (MKRREVLNTAAIATATTALVSCTQTN) are cleaved as a signal peptide. Residues 103–104 (YY), Gln160, and Arg181 each bind substrate. Gln160 provides a ligand contact to Na(+). Residues Glu218, Trp219, and Glu244 each contribute to the Na(+) site.

Belongs to the bacterial solute-binding protein 7 family. In terms of assembly, homodimer. The complex comprises the extracytoplasmic solute receptor protein all3028, and the two putative transmembrane proteins alr3026 and alr3027.

The protein resides in the periplasm. Its activity is regulated as follows. Pyruvate uptake inhibited by 2-oxobutyrate, 2-oxovalerate, 2-oxoisovalerate, 2-oxoisocaproate and 2-oxo-3-methylvalerate. Its function is as follows. Part of the tripartite ATP-independent periplasmic (TRAP) transport system involved in the uptake of monocarboxylate 2-oxoacids. This protein specifically binds monocarboxylate 2-oxoacids including pyruvate, 2-oxobutyrate, 2-oxovalerate, 2-oxoisovalerate, 2-oxoisocaproate and 2-oxo-3-methylvalerate. Is not able to bind mannitol. This is Monocarboxylate 2-oxoacid-binding periplasmic protein all3028 from Nostoc sp. (strain PCC 7120 / SAG 25.82 / UTEX 2576).